A 257-amino-acid chain; its full sequence is Type III pantothenate kinase (257 aa).

5–12 contributes to the ATP binding site; the sequence is DIGNTNIK. 107–110 is a binding site for substrate; it reads GSDR. Asp109 acts as the Proton acceptor in catalysis. Residue Thr133 coordinates ATP.

It belongs to the type III pantothenate kinase family. Homodimer. Requires NH4(+) as cofactor. The cofactor is K(+).

The protein resides in the cytoplasm. It catalyses the reaction (R)-pantothenate + ATP = (R)-4'-phosphopantothenate + ADP + H(+). Its pathway is cofactor biosynthesis; coenzyme A biosynthesis; CoA from (R)-pantothenate: step 1/5. Catalyzes the phosphorylation of pantothenate (Pan), the first step in CoA biosynthesis. This Ehrlichia ruminantium (strain Welgevonden) protein is Type III pantothenate kinase.